We begin with the raw amino-acid sequence, 272 residues long: Putative MgpC-like protein MPN_366 (272 aa).

Disordered stretches follow at residues 65-84 and 171-196; these read QESQ…TSGS and GSGQ…PMPS. Residues 72-84 show a composition bias toward low complexity; sequence NGSQSGSSDTSGS. The span at 173–187 shows a compositional bias: polar residues; that stretch reads GQESSWNSQRSQKGL.

It belongs to the MgpC family.

This chain is Putative MgpC-like protein MPN_366, found in Mycoplasma pneumoniae (strain ATCC 29342 / M129 / Subtype 1) (Mycoplasmoides pneumoniae).